The primary structure comprises 206 residues: Alpha-S1-casein (206 aa).

The signal sequence occupies residues M1–A15. 8 positions are modified to phosphoserine: S33, S77, S78, S79, S80, S81, S82, and S89. The tract at residues H67 to Y106 is disordered. The segment covering E91 to D100 has biased composition (basic and acidic residues).

This sequence belongs to the alpha-casein family. As to expression, mammary gland specific. Secreted in milk.

It is found in the secreted. Important role in the capacity of milk to transport calcium phosphate. This Sus scrofa (Pig) protein is Alpha-S1-casein (CSN1S1).